The chain runs to 266 residues: Glucosamine-6-phosphate deaminase (266 aa).

Residue aspartate 72 is the Proton acceptor; for enolization step of the active site. Aspartate 141 functions as the For ring-opening step in the catalytic mechanism. The active-site Proton acceptor; for ring-opening step is the histidine 143. The For ring-opening step role is filled by glutamate 148.

Belongs to the glucosamine/galactosamine-6-phosphate isomerase family. NagB subfamily. As to quaternary structure, homohexamer.

The enzyme catalyses alpha-D-glucosamine 6-phosphate + H2O = beta-D-fructose 6-phosphate + NH4(+). The protein operates within amino-sugar metabolism; N-acetylneuraminate degradation; D-fructose 6-phosphate from N-acetylneuraminate: step 5/5. With respect to regulation, allosterically activated by N-acetylglucosamine 6-phosphate (GlcNAc6P). In terms of biological role, catalyzes the reversible isomerization-deamination of glucosamine 6-phosphate (GlcN6P) to form fructose 6-phosphate (Fru6P) and ammonium ion. In Aliivibrio fischeri (strain ATCC 700601 / ES114) (Vibrio fischeri), this protein is Glucosamine-6-phosphate deaminase.